The following is a 355-amino-acid chain: Homoserine O-succinyltransferase (355 aa).

C146 functions as the Acyl-thioester intermediate in the catalytic mechanism. 2 residues coordinate substrate: K167 and S196. H239 serves as the catalytic Proton acceptor. The active site involves E241. R253 contacts substrate.

This sequence belongs to the MetA family.

It localises to the cytoplasm. It catalyses the reaction L-homoserine + succinyl-CoA = O-succinyl-L-homoserine + CoA. It functions in the pathway amino-acid biosynthesis; L-methionine biosynthesis via de novo pathway; O-succinyl-L-homoserine from L-homoserine: step 1/1. In terms of biological role, transfers a succinyl group from succinyl-CoA to L-homoserine, forming succinyl-L-homoserine. In Methylococcus capsulatus (strain ATCC 33009 / NCIMB 11132 / Bath), this protein is Homoserine O-succinyltransferase.